Consider the following 318-residue polypeptide: MNMNFLEFEQPIAELLAQIEELKHVSEHVGSSVDLTDEIKHLEKKNEELTRKLFSDLGAWQISQLARHPQRPYTEDYIARMFTDFDEMAGDRAFADDKAIVGGTARLDGQPVMVIGHQKGRDTQEKIRRNFGMPRPEGYRKALRLMQMAERFKMPILTFIDTPGAYPGVGAEERGQSEAIARNLKVMSSLKVPVICTVIGEGGSGGALAIGVGDRVNMLQYSTYSVISPEGCASILWKSADKANVAAEAMGITAARLKELKLIDSIVPEPLGGAHRNVDEMANLLKQRILTDLNELNSLHTDELLRKRYQQLMSHGYC.

Residues 41–295 (HLEKKNEELT…KQRILTDLNE (255 aa)) form the CoA carboxyltransferase C-terminal domain.

Belongs to the AccA family. Acetyl-CoA carboxylase is a heterohexamer composed of biotin carboxyl carrier protein (AccB), biotin carboxylase (AccC) and two subunits each of ACCase subunit alpha (AccA) and ACCase subunit beta (AccD).

The protein resides in the cytoplasm. It carries out the reaction N(6)-carboxybiotinyl-L-lysyl-[protein] + acetyl-CoA = N(6)-biotinyl-L-lysyl-[protein] + malonyl-CoA. The protein operates within lipid metabolism; malonyl-CoA biosynthesis; malonyl-CoA from acetyl-CoA: step 1/1. Component of the acetyl coenzyme A carboxylase (ACC) complex. First, biotin carboxylase catalyzes the carboxylation of biotin on its carrier protein (BCCP) and then the CO(2) group is transferred by the carboxyltransferase to acetyl-CoA to form malonyl-CoA. This Tolumonas auensis (strain DSM 9187 / NBRC 110442 / TA 4) protein is Acetyl-coenzyme A carboxylase carboxyl transferase subunit alpha.